The chain runs to 158 residues: SsrA-binding protein (158 aa).

Residues 133–158 (QLHDKRETEKKRDWNKEKGRLLRDKH) form a disordered region.

Belongs to the SmpB family.

The protein resides in the cytoplasm. Its function is as follows. Required for rescue of stalled ribosomes mediated by trans-translation. Binds to transfer-messenger RNA (tmRNA), required for stable association of tmRNA with ribosomes. tmRNA and SmpB together mimic tRNA shape, replacing the anticodon stem-loop with SmpB. tmRNA is encoded by the ssrA gene; the 2 termini fold to resemble tRNA(Ala) and it encodes a 'tag peptide', a short internal open reading frame. During trans-translation Ala-aminoacylated tmRNA acts like a tRNA, entering the A-site of stalled ribosomes, displacing the stalled mRNA. The ribosome then switches to translate the ORF on the tmRNA; the nascent peptide is terminated with the 'tag peptide' encoded by the tmRNA and targeted for degradation. The ribosome is freed to recommence translation, which seems to be the essential function of trans-translation. This Beijerinckia indica subsp. indica (strain ATCC 9039 / DSM 1715 / NCIMB 8712) protein is SsrA-binding protein.